We begin with the raw amino-acid sequence, 608 residues long: Elongation factor 4 (608 aa).

Positions 11 to 193 (KKIRNFSIIA…QIVEKVPEPS (183 aa)) constitute a tr-type G domain. GTP-binding positions include 23 to 28 (DHGKST) and 140 to 143 (NKID).

The protein belongs to the TRAFAC class translation factor GTPase superfamily. Classic translation factor GTPase family. LepA subfamily.

It localises to the cell membrane. The enzyme catalyses GTP + H2O = GDP + phosphate + H(+). In terms of biological role, required for accurate and efficient protein synthesis under certain stress conditions. May act as a fidelity factor of the translation reaction, by catalyzing a one-codon backward translocation of tRNAs on improperly translocated ribosomes. Back-translocation proceeds from a post-translocation (POST) complex to a pre-translocation (PRE) complex, thus giving elongation factor G a second chance to translocate the tRNAs correctly. Binds to ribosomes in a GTP-dependent manner. This is Elongation factor 4 from Listeria innocua serovar 6a (strain ATCC BAA-680 / CLIP 11262).